The following is a 299-amino-acid chain: Protoheme IX farnesyltransferase (299 aa).

The next 9 membrane-spanning stretches (helical) occupy residues 25–45 (VVLL…RAGV), 47–67 (WTVL…AAAV), 95–115 (AAAI…LLLF), 119–139 (LAAW…TGFL), 147–167 (IVIG…AVTG), 173–193 (PLLL…ALAI), 218–238 (VHIL…YAIH), 243–263 (LYLV…WVLY), and 279–299 (IWYL…LLNI).

It belongs to the UbiA prenyltransferase family. Protoheme IX farnesyltransferase subfamily.

It is found in the cell inner membrane. The catalysed reaction is heme b + (2E,6E)-farnesyl diphosphate + H2O = Fe(II)-heme o + diphosphate. Its pathway is porphyrin-containing compound metabolism; heme O biosynthesis; heme O from protoheme: step 1/1. Functionally, converts heme B (protoheme IX) to heme O by substitution of the vinyl group on carbon 2 of heme B porphyrin ring with a hydroxyethyl farnesyl side group. This Ectopseudomonas mendocina (strain ymp) (Pseudomonas mendocina) protein is Protoheme IX farnesyltransferase.